The following is a 354-amino-acid chain: NADH-quinone oxidoreductase subunit H (354 aa).

The next 8 membrane-spanning stretches (helical) occupy residues 25–45 (LVRI…LILW), 91–111 (WLYL…WAVI), 126–146 (LLYA…AGWA), 170–190 (MGFA…SEIV), 205–225 (FLSW…ISGI), 253–273 (MAFA…SALA), 290–310 (FIPG…VFIW), and 330–350 (VFLP…MSPL).

The protein belongs to the complex I subunit 1 family. NDH-1 is composed of 14 different subunits. Subunits NuoA, H, J, K, L, M, N constitute the membrane sector of the complex.

The protein resides in the cell inner membrane. It carries out the reaction a quinone + NADH + 5 H(+)(in) = a quinol + NAD(+) + 4 H(+)(out). In terms of biological role, NDH-1 shuttles electrons from NADH, via FMN and iron-sulfur (Fe-S) centers, to quinones in the respiratory chain. The immediate electron acceptor for the enzyme in this species is believed to be ubiquinone. Couples the redox reaction to proton translocation (for every two electrons transferred, four hydrogen ions are translocated across the cytoplasmic membrane), and thus conserves the redox energy in a proton gradient. This subunit may bind ubiquinone. The polypeptide is NADH-quinone oxidoreductase subunit H (Burkholderia thailandensis (strain ATCC 700388 / DSM 13276 / CCUG 48851 / CIP 106301 / E264)).